Reading from the N-terminus, the 1770-residue chain is MESQQLHQNPHSLHGSAYASVTSKEVPSNQDPLAVSASNLPEFDRDSTKVNSQQETTPGTSAVPENHHHVSPQPASVPPPQNGQYQQHGMMTPNKAMASNWAHYQQPSMMTCSHYQTSPAYYQPDPHYPLPQYIPPLSTSSPDPIDLKNQHSEIPQAKTKVGNNVLPPHTLTSEENFSTWVKFYIRFLKNSNLGDIIPNDQGEIKRQMTYEEHAYIYNTFQAFAPFHLLPTWVKQILEINYADILTVLCKSVSKMQTNNQELKDWIALANLEYDGSTSADTFEITVSTIIQRLKENNINVSDRLACQLILKGLSGDFKYLRNQYRTKTNMKLSQLFAEIQLIYDENKIMNLNKPSQYKQHSEYKNVSRTSPNTTNTKVTTRNYHRTNSSKPRAAKAHNIATSSKFSRVNNDHINESTVSSQYLSDDDELSLGQQQKESKPTHTIDSNDELPDHLLIDSGASQTLVRSAHYLHHATPNSEINIVDAQKQDIPINAIGNLHFNFQNGTKTSIKALHTPNIAYDLLSLSELANQNITACFTRNTLERSDGTVLAPIVKHGDFYWLSKKYLIPSHISKLTINNVNKSKSVNKYPYPLIHRMLGHANFRSIQKSLKKNAVTYLKESDIEWSNASTYQCPDCLIGKSTKHRHVKGSRLKYQESYEPFQYLHTDIFGPVHHLPKSAPSYFISFTDEKTRFQWVYPLHDRREESILNVFTSILAFIKNQFNARVLVIQMDRGSEYTNKTLHKFFTNRGITACYTTTADSRAHGVAERLNRTLLNDCRTLLHCSGLPNHLWFSAVEFSTIIRNSLVSPKKRKSARQHAGLAGLDITTILPFGQPVIVNNHNPDSKIHPRGIPGYALHPSRNSYGYIIYLPSLKKTVDTTNYVILQNKQTKLDQFDYDTLTFDDDLNRLTAHNQSFIEQNETEQSYDQNTESDHDYQSEIEINSDPLVNDFSSQSINPLQLDKEPVQKVRAPKEVDADISEYNILPSTIRSRTPHIINKESTEMGGTVESDTTSPRHSSTFTARNQNRPGSTNEMIDLTSQDRVNYGLENIKTTRLGGTEEPYIQRNSDTNIKYRTTNSTPSIDDRSSNSESTTPIISIETKAVCDNTPSIDTDPPEYRSSDHATPNIMPDKSSKNVTADSILDDLPLPDLTHKSPTDTSDVSKDIPHIHSRQTNSSLGGMDDSNVLTTTKSKKRSLEDNETEIEVSRDTWNNKNMRSLEPPRSKKRINLIAAIKGVKSIKPVRTTLRYDEAITYNKDNKEKDRYVEAYHKEISQLLKMNTWDTNKYYDRNDIDPKKVINSMFIFNKKRDGTHKARFVARGDIQHPDTYDSDMQSNTVHHYALMTSLSIALDNDYYITQLDISSAYLYADIKEELYIRPPPHLGLNDKLLRLRKSLYGLKQSGANWYETIKSYLINCCDMQEVRGWSCVFKNSQVTICLFVDDMILFSKDLNANKKIITTLKKQYDTKIINLGESDNEIQYDILGLEIKYQRSKYMKLGMEKSLTEKLPKLNVPLNPKGKKLRAPGQPGHYIDQDELEIDEDEYKEKVHEMQKLIGLASYVGYKFRFDLLYYINTLAQHILFPSRQVLDMTYELIQFMWDTRDKQLIWHKNKPTKPDNKLVAISDASYGNQPYYKSQIGNIFLLNGKVIGGKSTKASLTCTSTTEAEIHAVSEAIPLLNNLSHLVQELNKKPIIKGLLTDSRSTISIIKSTNEEKFRNRFFGTKAMRLRDEVSGNNLYVYYIETKKNIADVMTKPLPIKTFKLLTNKWIH.

Composition is skewed to polar residues over residues 1 to 11, 19 to 39, and 49 to 60; these read MESQQLHQNPH, ASVT…SASN, and KVNSQQETTPGT. Disordered stretches follow at residues 1 to 86 and 360 to 453; these read MESQ…GQYQ and HSEY…LPDH. An RNA-binding region spans residues 295–397; sequence ENNINVSDRL…SSKPRAAKAH (103 aa). The segment covering 369–381 has biased composition (low complexity); that stretch reads TSPNTTNTKVTTR. Polar residues predominate over residues 399-408; sequence IATSSKFSRV. Asp-457 (for protease activity; shared with dimeric partner) is an active-site residue. The segment at 579–636 is integrase-type zinc finger-like; the sequence is NVNKSKSVNKYPYPLIHRMLGHANFRSIQKSLKKNAVTYLKESDIEWSNASTYQCPDC. An Integrase catalytic domain is found at 656-831; that stretch reads ESYEPFQYLH…AGLDITTILP (176 aa). Residues Asp-667 and Asp-732 each contribute to the Mg(2+) site. Disordered stretches follow at residues 1004–1034, 1059–1135, 1146–1165, and 1170–1205; these read MGGT…STNE, TEEP…KSSK, LPLP…VSKD, and HSRQ…TEIE. Composition is skewed to polar residues over residues 1009–1034 and 1065–1082; these read ESDT…STNE and QRNS…STPS. A compositionally biased stretch (basic and acidic residues) spans 1151–1165; the sequence is LTHKSPTDTSDVSKD. A Bipartite nuclear localization signal motif is present at residues 1193 to 1227; it reads KKRSLEDNETEIEVSRDTWNNKNMRSLEPPRSKKR. The Reverse transcriptase Ty1/copia-type domain occupies 1353 to 1491; sequence NDYYITQLDI…DILGLEIKYQ (139 aa). Residues Asp-1361, Asp-1442, Asp-1443, Asp-1625, Glu-1667, and Asp-1700 each contribute to the Mg(2+) site. In terms of domain architecture, RNase H Ty1/copia-type spans 1625 to 1767; it reads DASYGNQPYY…IKTFKLLTNK (143 aa).

The capsid protein forms a homotrimer, from which the VLPs are assembled. The protease is a homodimer, whose active site consists of two apposed aspartic acid residues. In terms of processing, initially, virus-like particles (VLPs) are composed of the structural unprocessed proteins Gag and Gag-Pol, and also contain the host initiator methionine tRNA (tRNA(i)-Met) which serves as a primer for minus-strand DNA synthesis, and a dimer of genomic Ty RNA. Processing of the polyproteins occurs within the particle and proceeds by an ordered pathway, called maturation. First, the protease (PR) is released by autocatalytic cleavage of the Gag-Pol polyprotein, and this cleavage is a prerequisite for subsequent processing at the remaining sites to release the mature structural and catalytic proteins. Maturation takes place prior to the RT reaction and is required to produce transposition-competent VLPs.

It is found in the cytoplasm. The protein localises to the nucleus. The enzyme catalyses DNA(n) + a 2'-deoxyribonucleoside 5'-triphosphate = DNA(n+1) + diphosphate. The catalysed reaction is Endonucleolytic cleavage to 5'-phosphomonoester.. Capsid protein (CA) is the structural component of the virus-like particle (VLP), forming the shell that encapsulates the retrotransposons dimeric RNA genome. The particles are assembled from trimer-clustered units and there are holes in the capsid shells that allow for the diffusion of macromolecules. CA also has nucleocapsid-like chaperone activity, promoting primer tRNA(i)-Met annealing to the multipartite primer-binding site (PBS), dimerization of Ty2 RNA and initiation of reverse transcription. Its function is as follows. The aspartyl protease (PR) mediates the proteolytic cleavages of the Gag and Gag-Pol polyproteins after assembly of the VLP. In terms of biological role, reverse transcriptase/ribonuclease H (RT) is a multifunctional enzyme that catalyzes the conversion of the retro-elements RNA genome into dsDNA within the VLP. The enzyme displays a DNA polymerase activity that can copy either DNA or RNA templates, and a ribonuclease H (RNase H) activity that cleaves the RNA strand of RNA-DNA heteroduplexes during plus-strand synthesis and hydrolyzes RNA primers. The conversion leads to a linear dsDNA copy of the retrotransposon that includes long terminal repeats (LTRs) at both ends. Functionally, integrase (IN) targets the VLP to the nucleus, where a subparticle preintegration complex (PIC) containing at least integrase and the newly synthesized dsDNA copy of the retrotransposon must transit the nuclear membrane. Once in the nucleus, integrase performs the integration of the dsDNA into the host genome. This chain is Transposon Ty2-GR1 Gag-Pol polyprotein (TY2B-GR1), found in Saccharomyces cerevisiae (strain ATCC 204508 / S288c) (Baker's yeast).